Consider the following 318-residue polypeptide: Aspartate carbamoyltransferase catalytic subunit (318 aa).

Residues Arg-67 and Thr-68 each contribute to the carbamoyl phosphate site. Residue Lys-95 participates in L-aspartate binding. Carbamoyl phosphate-binding residues include Arg-117, His-145, and Gln-148. Arg-178 and Arg-236 together coordinate L-aspartate. Carbamoyl phosphate contacts are provided by Gly-277 and Pro-278.

The protein belongs to the aspartate/ornithine carbamoyltransferase superfamily. ATCase family. In terms of assembly, heterododecamer (2C3:3R2) of six catalytic PyrB chains organized as two trimers (C3), and six regulatory PyrI chains organized as three dimers (R2).

It carries out the reaction carbamoyl phosphate + L-aspartate = N-carbamoyl-L-aspartate + phosphate + H(+). Its pathway is pyrimidine metabolism; UMP biosynthesis via de novo pathway; (S)-dihydroorotate from bicarbonate: step 2/3. Functionally, catalyzes the condensation of carbamoyl phosphate and aspartate to form carbamoyl aspartate and inorganic phosphate, the committed step in the de novo pyrimidine nucleotide biosynthesis pathway. The polypeptide is Aspartate carbamoyltransferase catalytic subunit (Roseiflexus castenholzii (strain DSM 13941 / HLO8)).